Here is a 97-residue protein sequence, read N- to C-terminus: Homeobox protein HD-9 (97 aa).

A DNA-binding region (homeobox) is located at residues 6–65; that stretch reads MPAKKSRLSKAQRDFLDTYFEVNPHPNTQERAYIASQSLVSEEKIRNWFQNRRTRERGDC.

It is found in the nucleus. The chain is Homeobox protein HD-9 (HD-9) from Encephalitozoon cuniculi (strain GB-M1) (Microsporidian parasite).